A 469-amino-acid polypeptide reads, in one-letter code: 3-isopropylmalate dehydratase large subunit (469 aa).

[4Fe-4S] cluster contacts are provided by Cys347, Cys410, and Cys413.

The protein belongs to the aconitase/IPM isomerase family. LeuC type 1 subfamily. Heterodimer of LeuC and LeuD. [4Fe-4S] cluster serves as cofactor.

It catalyses the reaction (2R,3S)-3-isopropylmalate = (2S)-2-isopropylmalate. Its pathway is amino-acid biosynthesis; L-leucine biosynthesis; L-leucine from 3-methyl-2-oxobutanoate: step 2/4. Catalyzes the isomerization between 2-isopropylmalate and 3-isopropylmalate, via the formation of 2-isopropylmaleate. This Burkholderia pseudomallei (strain 1106a) protein is 3-isopropylmalate dehydratase large subunit.